The following is a 526-amino-acid chain: GMP synthase [glutamine-hydrolyzing] (526 aa).

The Glutamine amidotransferase type-1 domain occupies 3–199; it reads KVAIIDFGSQ…FIKIAGCKTD (197 aa). Residue Cys-83 is the Nucleophile of the active site. Residues His-174 and Glu-176 contribute to the active site. The 193-residue stretch at 200-392 folds into the GMPS ATP-PPase domain; that stretch reads WTMNSFLDEQ…LGISDEILMR (193 aa). ATP is bound at residue 227 to 233; that stretch reads SGGVDSS.

As to quaternary structure, homodimer.

The enzyme catalyses XMP + L-glutamine + ATP + H2O = GMP + L-glutamate + AMP + diphosphate + 2 H(+). It participates in purine metabolism; GMP biosynthesis; GMP from XMP (L-Gln route): step 1/1. Functionally, catalyzes the synthesis of GMP from XMP. This Ehrlichia canis (strain Jake) protein is GMP synthase [glutamine-hydrolyzing].